A 436-amino-acid chain; its full sequence is Histidinol dehydrogenase (436 aa).

3 residues coordinate NAD(+): Tyr135, Gln196, and Asn219. The substrate site is built by Ser242, Gln264, and His267. Gln264 and His267 together coordinate Zn(2+). Active-site proton acceptor residues include Glu332 and His333. Residues His333, Asp366, Glu420, and His425 each coordinate substrate. Residue Asp366 participates in Zn(2+) binding. His425 serves as a coordination point for Zn(2+).

This sequence belongs to the histidinol dehydrogenase family. The cofactor is Zn(2+).

It catalyses the reaction L-histidinol + 2 NAD(+) + H2O = L-histidine + 2 NADH + 3 H(+). The protein operates within amino-acid biosynthesis; L-histidine biosynthesis; L-histidine from 5-phospho-alpha-D-ribose 1-diphosphate: step 9/9. Its function is as follows. Catalyzes the sequential NAD-dependent oxidations of L-histidinol to L-histidinaldehyde and then to L-histidine. The polypeptide is Histidinol dehydrogenase (Methylococcus capsulatus (strain ATCC 33009 / NCIMB 11132 / Bath)).